The primary structure comprises 527 residues: MNYDKLFQNVINNKLTDLELVLTDPENNNLVLNLHKIVLDINCPYFETLFSNNFIDSNMKKLNLFVEDSYITRDIIYNFYGQTNRSTDYPDWLYQLKKIKCQNFLCMKPDFYRLSDFVFDKDNFDELLNTIDSIGYDDKVVSLIFKNMPVDYDLVKFPIELLNRMLDVSGFYIMYYDNNRFSMYNQYCEFVVFDGISDFDYSPNSQIIYVPNSQEIVYVSEKIVVFNIETQISRITDSINPVSSKNYPTLCPDQEHIIYYNNKWDAICKFNVKTMKLIGTWRASNGSEINMDENNGTYFFDSIGCKIVFSPSGDKFVLITDGIICYDVKTIKVCWRFNKIVPLSRVDLGYVPTCIRDVMYSLCRKYIFYLTKYGLFVINSSNGHLVSEMKVRGISICHITCDIVAILTYDNSGIIMYDYQNNMIISELNFSDNICFGGESKICMNYFDGKLFIIGSNNTNRIDYNYIINISDFTYEKNFTEKIDKSYYVCDNDIIKYNNCCNNCFNIVTDFKSVLRDKIKNHIESIN.

Residues 16 to 89 (TDLELVLTDP…YGQTNRSTDY (74 aa)) enclose the BTB domain.

Belongs to the mimivirus BTB/WD family.

The polypeptide is Putative BTB/POZ domain-containing protein R225 (Acanthamoeba polyphaga (Amoeba)).